The primary structure comprises 107 residues: Glutaredoxin-1 (107 aa).

Alanine 2 is subject to N-acetylalanine. One can recognise a Glutaredoxin domain in the interval 3 to 106; sequence QEFVNCKIQS…ARLKQIGALQ (104 aa). Lysine 9 bears the N6-succinyllysine mark. 2 disulfide bridges follow: cysteine 23-cysteine 26 and cysteine 79-cysteine 83.

It belongs to the glutaredoxin family.

It is found in the cytoplasm. Functionally, has a glutathione-disulfide oxidoreductase activity in the presence of NADPH and glutathione reductase. Reduces low molecular weight disulfides and proteins. In Rattus norvegicus (Rat), this protein is Glutaredoxin-1 (Glrx).